The sequence spans 122 residues: MIHPETNLEVADNSGARRVQCIKVLGGSKRKTASVGDVIVVSVKEAIPRGKVKKGDVHQAVIVRTSFPVRRADGSAIRFDRNAAVLINKQQEPIGTRIFGPVVRELRGRKFMKIISLAPEVL.

This sequence belongs to the universal ribosomal protein uL14 family. Part of the 50S ribosomal subunit. Forms a cluster with proteins L3 and L19. In the 70S ribosome, L14 and L19 interact and together make contacts with the 16S rRNA in bridges B5 and B8.

Binds to 23S rRNA. Forms part of two intersubunit bridges in the 70S ribosome. This Granulibacter bethesdensis (strain ATCC BAA-1260 / CGDNIH1) protein is Large ribosomal subunit protein uL14.